The chain runs to 343 residues: Small ribosomal subunit biogenesis GTPase RsgA (343 aa).

Residues 116-275 (RGQLKPVAAN…LIDSPGIREF (160 aa)) form the CP-type G domain. GTP contacts are provided by residues 163–166 (NKAD) and 217–225 (GQSGVGKSS). Zn(2+) contacts are provided by cysteine 299, cysteine 304, histidine 306, and cysteine 312.

It belongs to the TRAFAC class YlqF/YawG GTPase family. RsgA subfamily. In terms of assembly, monomer. Associates with 30S ribosomal subunit, binds 16S rRNA. Zn(2+) is required as a cofactor.

It localises to the cytoplasm. Functionally, one of several proteins that assist in the late maturation steps of the functional core of the 30S ribosomal subunit. Helps release RbfA from mature subunits. May play a role in the assembly of ribosomal proteins into the subunit. Circularly permuted GTPase that catalyzes slow GTP hydrolysis, GTPase activity is stimulated by the 30S ribosomal subunit. This Ectopseudomonas mendocina (strain ymp) (Pseudomonas mendocina) protein is Small ribosomal subunit biogenesis GTPase RsgA.